Reading from the N-terminus, the 83-residue chain is Acid shock protein (83 aa).

An N-terminal signal peptide occupies residues 1 to 21 (MKKVLALVVAAAMGLSSAAFA). Residues 22–40 (AETATPAKTATPAKTTQNT) are compositionally biased toward low complexity. The propeptide occupies 22–56 (AETATPAKTATPAKTTQNTQHHKKQHKKTVEQKAQ). The tract at residues 22–83 (AETATPAKTA…TSKTTSQPAA (62 aa)) is disordered. Over residues 57-70 (AAKKHQKKDGKKAP) the composition is skewed to basic residues. Over residues 71–83 (AKSTSKTTSQPAA) the composition is skewed to low complexity.

Belongs to the Asr family. Proteolytic processing gives rise to the active protein.

The protein localises to the periplasm. In terms of biological role, required for growth and/or survival at acidic conditions. This is Acid shock protein from Salmonella heidelberg (strain SL476).